Reading from the N-terminus, the 251-residue chain is Cell division protein ZapD (251 aa).

Belongs to the ZapD family. Interacts with FtsZ.

It localises to the cytoplasm. Functionally, cell division factor that enhances FtsZ-ring assembly. Directly interacts with FtsZ and promotes bundling of FtsZ protofilaments, with a reduction in FtsZ GTPase activity. This is Cell division protein ZapD from Burkholderia lata (strain ATCC 17760 / DSM 23089 / LMG 22485 / NCIMB 9086 / R18194 / 383).